Consider the following 211-residue polypeptide: MSAFNNFVNFVANIVAPMQRQFINFVRIAICIVMVWIGGLKVCQYEADGIAHFVSNSPFFSYMYKKGPNLVDDGTGKMVMEYTLHKNPEGKMVAKNIEWHKENGTYTASYIIGATIVTVGLLTLSGIWFPVSGMAGGLLTFGMSIVTLSFMITTPEIWVPNLGGDMPTPAHGFPYLSAVGRLIVKDVIMMAGGLVAAAECANRILARRKAI.

3 helical membrane-spanning segments follow: residues 22-42, 111-131, and 133-153; these read FINF…GLKV, IIGA…WFPV, and GMAG…FMIT.

It to E.coli YkgB. This sequence to H.influenzae HI_0219.

The protein localises to the cell membrane. This is an uncharacterized protein from Mannheimia haemolytica (Pasteurella haemolytica).